Here is a 420-residue protein sequence, read N- to C-terminus: Serine hydroxymethyltransferase (420 aa).

(6S)-5,6,7,8-tetrahydrofolate contacts are provided by residues leucine 121 and 125 to 127; that span reads GHL. At lysine 230 the chain carries N6-(pyridoxal phosphate)lysine. 355–357 is a binding site for (6S)-5,6,7,8-tetrahydrofolate; it reads SPF.

The protein belongs to the SHMT family. In terms of assembly, homodimer. Pyridoxal 5'-phosphate is required as a cofactor.

The protein localises to the cytoplasm. The enzyme catalyses (6R)-5,10-methylene-5,6,7,8-tetrahydrofolate + glycine + H2O = (6S)-5,6,7,8-tetrahydrofolate + L-serine. It participates in one-carbon metabolism; tetrahydrofolate interconversion. It functions in the pathway amino-acid biosynthesis; glycine biosynthesis; glycine from L-serine: step 1/1. Functionally, catalyzes the reversible interconversion of serine and glycine with tetrahydrofolate (THF) serving as the one-carbon carrier. This reaction serves as the major source of one-carbon groups required for the biosynthesis of purines, thymidylate, methionine, and other important biomolecules. Also exhibits THF-independent aldolase activity toward beta-hydroxyamino acids, producing glycine and aldehydes, via a retro-aldol mechanism. This is Serine hydroxymethyltransferase from Streptococcus gordonii (strain Challis / ATCC 35105 / BCRC 15272 / CH1 / DL1 / V288).